Consider the following 33-residue polypeptide: Ice-structuring protein SS-3 (33 aa).

Belongs to the type-I AFP family.

Functionally, antifreeze proteins lower the blood freezing point. The chain is Ice-structuring protein SS-3 from Myoxocephalus scorpius (Shorthorn sculpin).